Consider the following 428-residue polypeptide: Enolase (428 aa).

Gln-163 provides a ligand contact to (2R)-2-phosphoglycerate. Glu-205 (proton donor) is an active-site residue. Mg(2+) contacts are provided by Asp-242, Glu-286, and Asp-313. Residues Lys-338, Arg-367, Ser-368, and Lys-389 each contribute to the (2R)-2-phosphoglycerate site. The Proton acceptor role is filled by Lys-338.

Belongs to the enolase family. Mg(2+) is required as a cofactor.

Its subcellular location is the cytoplasm. The protein resides in the secreted. It is found in the cell surface. It carries out the reaction (2R)-2-phosphoglycerate = phosphoenolpyruvate + H2O. Its pathway is carbohydrate degradation; glycolysis; pyruvate from D-glyceraldehyde 3-phosphate: step 4/5. In terms of biological role, catalyzes the reversible conversion of 2-phosphoglycerate (2-PG) into phosphoenolpyruvate (PEP). It is essential for the degradation of carbohydrates via glycolysis. The protein is Enolase of Syntrophus aciditrophicus (strain SB).